The sequence spans 878 residues: Phosphoenolpyruvate carboxylase (878 aa).

Residues His140 and Lys545 contribute to the active site.

This sequence belongs to the PEPCase type 1 family. Mg(2+) serves as cofactor.

The enzyme catalyses oxaloacetate + phosphate = phosphoenolpyruvate + hydrogencarbonate. Forms oxaloacetate, a four-carbon dicarboxylic acid source for the tricarboxylic acid cycle. The sequence is that of Phosphoenolpyruvate carboxylase from Pseudomonas aeruginosa (strain ATCC 15692 / DSM 22644 / CIP 104116 / JCM 14847 / LMG 12228 / 1C / PRS 101 / PAO1).